Reading from the N-terminus, the 367-residue chain is tRNA-specific 2-thiouridylase MnmA (367 aa).

Residues 11–18 (AMSGGVDS) and methionine 37 each bind ATP. An interaction with target base in tRNA region spans residues 97 to 99 (NPD). Catalysis depends on cysteine 102, which acts as the Nucleophile. Cysteine 102 and cysteine 199 are disulfide-bonded. Residue glycine 127 coordinates ATP. The interval 149 to 151 (KDQ) is interaction with tRNA. Cysteine 199 (cysteine persulfide intermediate) is an active-site residue. The interval 311–312 (RY) is interaction with tRNA.

It belongs to the MnmA/TRMU family. Interacts with TusE.

The protein localises to the cytoplasm. The enzyme catalyses S-sulfanyl-L-cysteinyl-[protein] + uridine(34) in tRNA + AH2 + ATP = 2-thiouridine(34) in tRNA + L-cysteinyl-[protein] + A + AMP + diphosphate + H(+). In terms of biological role, catalyzes the 2-thiolation of uridine at the wobble position (U34) of tRNA(Lys), tRNA(Glu) and tRNA(Gln), leading to the formation of s(2)U34, the first step of tRNA-mnm(5)s(2)U34 synthesis. Sulfur is provided by IscS, via a sulfur-relay system. Binds ATP and its substrate tRNAs. The polypeptide is tRNA-specific 2-thiouridylase MnmA (Buchnera aphidicola subsp. Schizaphis graminum (strain Sg)).